Consider the following 341-residue polypeptide: Phosphate acyltransferase (341 aa).

This sequence belongs to the PlsX family. As to quaternary structure, homodimer. Probably interacts with PlsY.

It is found in the cytoplasm. It catalyses the reaction a fatty acyl-[ACP] + phosphate = an acyl phosphate + holo-[ACP]. The protein operates within lipid metabolism; phospholipid metabolism. In terms of biological role, catalyzes the reversible formation of acyl-phosphate (acyl-PO(4)) from acyl-[acyl-carrier-protein] (acyl-ACP). This enzyme utilizes acyl-ACP as fatty acyl donor, but not acyl-CoA. The sequence is that of Phosphate acyltransferase from Nostoc sp. (strain PCC 7120 / SAG 25.82 / UTEX 2576).